Consider the following 194-residue polypeptide: Thymidine kinase (194 aa).

Residues 15-22 (GSMFSGKS) and 88-91 (DEVQ) contribute to the ATP site. The Proton acceptor role is filled by glutamate 89. Positions 145, 148, 183, and 186 each coordinate Zn(2+).

Belongs to the thymidine kinase family. Homotetramer.

The protein resides in the cytoplasm. The enzyme catalyses thymidine + ATP = dTMP + ADP + H(+). The protein is Thymidine kinase of Bacillus anthracis (strain A0248).